A 1463-amino-acid chain; its full sequence is Clustered mitochondria protein homolog (1463 aa).

The disordered stretch occupies residues 1 to 79 (MAKNKKQNGK…ETEQQQQQQE (79 aa)). A compositionally biased stretch (low complexity) spans 10–22 (KAKTPPVVAAAAG). One can recognise a Clu domain in the interval 374-616 (RAEDTFSSKL…RTFPPDVNFL (243 aa)). Disordered stretches follow at residues 684–753 (AQKT…SEDA), 942–988 (GDGQ…SVPS), and 1387–1463 (QKEA…RRKS). The segment covering 692 to 702 (KQAAIEAAAPA) has biased composition (low complexity). Over residues 703-731 (EGDKTPAKDAKDGKEAGKDANDGKEEGST) the composition is skewed to basic and acidic residues. A compositionally biased stretch (basic residues) spans 955–964 (GGKKQNKQSK). Residues 965–980 (RGGGGGGGKGAAGGGR) are compositionally biased toward gly residues. Positions 1438-1456 (AEAASHTAGGAAANTAAPA) are enriched in low complexity.

It belongs to the CLU family.

The protein resides in the cytoplasm. In terms of biological role, mRNA-binding protein involved in proper cytoplasmic distribution of mitochondria. In Anopheles gambiae (African malaria mosquito), this protein is Clustered mitochondria protein homolog.